Reading from the N-terminus, the 358-residue chain is Phospho-N-acetylmuramoyl-pentapeptide-transferase (358 aa).

10 consecutive transmembrane segments (helical) span residues 27–47, 73–93, 97–117, 134–154, 170–190, 197–217, 233–253, 261–281, 286–306, and 335–355; these read IYAM…VIRV, TMGG…WADL, YIWT…VDDY, MFWQ…KPGF, LWFW…NAVN, GLAI…SYVA, GAGE…GFLW, VFMG…IAVI, ILLV…IFQV, and KIIV…ISTL.

It belongs to the glycosyltransferase 4 family. MraY subfamily. Requires Mg(2+) as cofactor.

It localises to the cell inner membrane. The catalysed reaction is UDP-N-acetyl-alpha-D-muramoyl-L-alanyl-gamma-D-glutamyl-meso-2,6-diaminopimeloyl-D-alanyl-D-alanine + di-trans,octa-cis-undecaprenyl phosphate = di-trans,octa-cis-undecaprenyl diphospho-N-acetyl-alpha-D-muramoyl-L-alanyl-D-glutamyl-meso-2,6-diaminopimeloyl-D-alanyl-D-alanine + UMP. Its pathway is cell wall biogenesis; peptidoglycan biosynthesis. Catalyzes the initial step of the lipid cycle reactions in the biosynthesis of the cell wall peptidoglycan: transfers peptidoglycan precursor phospho-MurNAc-pentapeptide from UDP-MurNAc-pentapeptide onto the lipid carrier undecaprenyl phosphate, yielding undecaprenyl-pyrophosphoryl-MurNAc-pentapeptide, known as lipid I. The chain is Phospho-N-acetylmuramoyl-pentapeptide-transferase from Pelobacter propionicus (strain DSM 2379 / NBRC 103807 / OttBd1).